Here is a 683-residue protein sequence, read N- to C-terminus: Leucine-rich repeat and calponin homology domain-containing protein 4 (683 aa).

Residues 1–18 are compositionally biased toward low complexity; sequence MAAAVAAPLAAGGEEAAA. The segment at 1 to 34 is disordered; the sequence is MAAAVAAPLAAGGEEAAATTSVPGSPGLPGRRSA. LRR repeat units lie at residues 41 to 64, 67 to 90, 92 to 113, 114 to 136, 138 to 158, 159 to 181, 182 to 204, 206 to 226, and 227 to 250; these read AVAT…AARS, LSDI…ACQL, SLEG…LGNL, TALT…ICQL, LRVL…IGTL, GSLR…LCGL, SSLR…LGDL, LVRL…FCRL, and RHLQ…CLKG. Residues 268–292 form a disordered region; that stretch reads ALGDLAPSRPPSFSPCPAEDLFPGH. Phosphoserine is present on residues serine 279, serine 281, serine 304, serine 307, serine 309, and serine 313. 2 disordered regions span residues 326–436 and 449–539; these read FRIS…LLKP and STQA…DEKD. 3 stretches are compositionally biased toward basic and acidic residues: residues 330 to 345, 357 to 376, and 384 to 418; these read ELAR…KEDG, IDSH…EQRP, and GDRE…ERRQ. A phosphoserine mark is found at serine 432 and serine 457. The segment covering 449-460 has biased composition (polar residues); it reads STQAMHNGSPKS. Low complexity-rich tracts occupy residues 461–481 and 511–524; these read SASQ…PASQ and SSSQ…SPDS. A phosphoserine mark is found at serine 511, serine 513, serine 517, serine 521, and serine 589. A Calponin-homology (CH) domain is found at 534–647; sequence VPDEKDLMTQ…ALEAVKRVGG (114 aa). A helical membrane pass occupies residues 653-673; that stretch reads LWPPSGLGGFVVFYVVLMLLL.

The protein resides in the cell membrane. Accessory protein that regulates signaling by multiple TLRs, acting as a broad-spanning regulator of the innate immune response. In macrophages, binds LPS and promotes proper docking of LPS in lipid raft membrane. May be required for lipid raft maintenance. The protein is Leucine-rich repeat and calponin homology domain-containing protein 4 of Homo sapiens (Human).